The following is a 91-amino-acid chain: Secretoglobin family 3A member 2 (91 aa).

Positions 1-21 (MKLVSIFLLVTIGICGYSATA) are cleaved as a signal peptide.

It belongs to the secretoglobin family. UGRP subfamily. Homodimer; disulfide-linked. Monomer. Interacts with APOA1. In terms of tissue distribution, highly expressed in lung where it localizes to epithelial cells of the trachea, bronchus and bronchioles (at protein level). Expressed in club cells of the bronchioles. Also detected in the anterior and posterior lobes of the pituitary gland where it may localize to gonadotropic cells (at protein level). Not detected in other tissues tested.

It is found in the secreted. Functionally, secreted cytokine-like protein. Binds to the scavenger receptor MARCO. Can also bind to pathogens including the Gram-positive bacterium L.monocytogenes, the Gram-negative bacterium P.aeruginosa, and yeast. Strongly inhibits phospholipase A2 (PLA2G1B) activity. Seems to have anti-inflammatory effects in respiratory epithelium. Also has anti-fibrotic activity in lung. May play a role in fetal lung development and maturation. Promotes branching morphogenesis during early stages of lung development. In the pituitary, may inhibit production of follicle-stimulating hormone (FSH) and luteinizing hormone (LH). This Mus musculus (Mouse) protein is Secretoglobin family 3A member 2 (Scgb3a2).